Here is a 151-residue protein sequence, read N- to C-terminus: Protein INO4 (151 aa).

The bHLH domain occupies 45 to 97; that stretch reads QIRINHVSSEKKRRELERAIFDELVAVVPDLQPQESRSELIIYLKSLSYLSWL. The tract at residues 112 to 137 is disordered; it reads HEAKTGSSSSSDPVQEQNGNIRDLVP. Residues 116-131 are compositionally biased toward polar residues; it reads TGSSSSSDPVQEQNGN.

In terms of assembly, efficient DNA binding requires dimerization with another bHLH protein.

The protein resides in the nucleus. In terms of biological role, transcriptional activator of phospholipid synthetic genes (such as INO1, CHO1/PSS, CHO2/PEM1, OPI3/PEM2, etc.). This Saccharomyces cerevisiae (strain ATCC 204508 / S288c) (Baker's yeast) protein is Protein INO4 (INO4).